The chain runs to 171 residues: MLP-like protein 31 (171 aa).

It belongs to the MLP family.

The sequence is that of MLP-like protein 31 (MLP31) from Arabidopsis thaliana (Mouse-ear cress).